The primary structure comprises 476 residues: Chromosomal replication initiator protein DnaA (476 aa).

A domain I, interacts with DnaA modulators region spans residues 1 to 75 (MLAPDTFWLA…TQMAENHFAR (75 aa)). The domain II stretch occupies residues 75-139 (RPVQLQLELA…AKEKQEKNPT (65 aa)). The segment at 110 to 141 (FDAPTESAQKAPKDTKDTKDAKEKQEKNPTRL) is disordered. Basic and acidic residues predominate over residues 120–138 (APKDTKDTKDAKEKQEKNP). The segment at 140 to 356 (RLNPSFTFNT…GALKRVVAYS (217 aa)) is domain III, AAA+ region. The ATP site is built by Gly184, Gly186, Lys187, and Thr188. The tract at residues 357–476 (RFTGHALTLD…FNTLLHILRG (120 aa)) is domain IV, binds dsDNA.

Belongs to the DnaA family. As to quaternary structure, oligomerizes as a right-handed, spiral filament on DNA at oriC.

It is found in the cytoplasm. In terms of biological role, plays an essential role in the initiation and regulation of chromosomal replication. ATP-DnaA binds to the origin of replication (oriC) to initiate formation of the DNA replication initiation complex once per cell cycle. Binds the DnaA box (a 9 base pair repeat at the origin) and separates the double-stranded (ds)DNA. Forms a right-handed helical filament on oriC DNA; dsDNA binds to the exterior of the filament while single-stranded (ss)DNA is stabiized in the filament's interior. The ATP-DnaA-oriC complex binds and stabilizes one strand of the AT-rich DNA unwinding element (DUE), permitting loading of DNA polymerase. After initiation quickly degrades to an ADP-DnaA complex that is not apt for DNA replication. Binds acidic phospholipids. The polypeptide is Chromosomal replication initiator protein DnaA (Nitrosospira multiformis (strain ATCC 25196 / NCIMB 11849 / C 71)).